Here is a 199-residue protein sequence, read N- to C-terminus: Probable adenylyl-sulfate kinase (199 aa).

34–41 (GLSGSGKS) contacts ATP. S108 (phosphoserine intermediate) is an active-site residue.

It belongs to the APS kinase family.

The enzyme catalyses adenosine 5'-phosphosulfate + ATP = 3'-phosphoadenylyl sulfate + ADP + H(+). It functions in the pathway sulfur metabolism; hydrogen sulfide biosynthesis; sulfite from sulfate: step 2/3. Functionally, catalyzes the synthesis of activated sulfate. The protein is Probable adenylyl-sulfate kinase (yisZ) of Bacillus subtilis (strain 168).